The sequence spans 1783 residues: Collagen alpha-1(XXVII) chain A (1783 aa).

A signal peptide spans 1 to 35; sequence MNLATRRRVRRTSRLVAKRALLLCILLYCTSFGFT. Positions 73–235 constitute a Laminin G-like domain; it reads TTRARVTTPT…NICSAIRRQC (163 aa). 5 disordered regions span residues 288 to 312, 327 to 524, 553 to 744, 772 to 1461, and 1512 to 1546; these read SSSV…LALM, HKPS…PRTP, VGAP…APGP, PGNM…GDIG, and GNPG…LPGP. Low complexity predominate over residues 403–415; that stretch reads KPTSVPKPNPTKN. Residues 436 to 447 are compositionally biased toward pro residues; it reads LPAPKPTVPKRP. A compositionally biased stretch (polar residues) spans 462–494; the sequence is HTTPLTPKSTLAPNSTSKKPLPTLKSTSFTTAA. Residues 553–1547 are triple-helical region; the sequence is VGAPGLKGDQ…RGPPGLPGPP (995 aa). Residues 554 to 608 enclose the Collagen-like 1 domain; that stretch reads GAPGLKGDQGESGLPGPPGKPGQPGMRGPRGPPGPHGKPGRPGPTGLKGKKGDPG. Low complexity-rich tracts occupy residues 622–633, 651–661, 735–744, 817–829, and 861–870; these read VGLPGPVGLVGV, EPGEQGPVGEA, EPGVIGAPGP, PGPQ…IGPS, and ARGLPGPRGA. 2 consecutive Collagen-like domains span residues 818-873 and 845-902; these read GPQG…AAGR and GKPG…GALG. Gly residues predominate over residues 926–935; sequence GFIGPGGEAG. Over residues 967 to 976 the composition is skewed to pro residues; the sequence is GGPPGPPGSP. Composition is skewed to low complexity over residues 978–988 and 1098–1129; these read SPGSRGPIGIR and SIGL…AGPD. In terms of domain architecture, Collagen-like 4 spans 986 to 1043; the sequence is GIRGPKGRRGPRGPDGVPGEIGTEGKKGPDGPPGKIGFPGHAGKIGESGEVGPKGFPG. Basic and acidic residues-rich tracts occupy residues 1131–1158, 1170–1182, and 1257–1267; these read TKGE…KDGP, PEGK…ERGK, and AKGEQGDDGKV. One can recognise a Collagen-like 5 domain in the interval 1269–1326; sequence GPTGAPGLRGPVGKRGDRGEPGDPGYVGQQGVDGLRGKPGAPGLPGDPGPRGTQGPKG. Composition is skewed to low complexity over residues 1334-1349 and 1396-1409; these read KGKQ…RGSP and LPGK…VGVI. Collagen-like domains are found at residues 1446 to 1503 and 1497 to 1549; these read GPQG…GLAG and GRGG…PPGI. Positions 1537-1546 are enriched in pro residues; it reads PRGPPGLPGP. Residues 1551 to 1783 constitute a propeptide, C-terminal propeptide; sequence LAMNQDFGLG…HLEVGPVCFL (233 aa). In terms of domain architecture, Fibrillar collagen NC1 spans 1589-1783; it reads PEILRTLDYL…HLEVGPVCFL (195 aa). Cystine bridges form between C1619-C1651, C1660-C1781, and C1696-C1734. Ca(2+) is bound by residues D1637, N1639, C1642, and D1645. N-linked (GlcNAc...) asparagine glycosylation occurs at N1698.

It belongs to the fibrillar collagen family. Expressed dynamically in the notochord from late epiboly, spreading to the anterior notochord by 24 hpf, and then throughout the notochord by 30 hpf. Subsequently, notochordal expression becomes restricted to the distal tip of the tail by 48 hpf and is no longer detectable by 72 hpf. Also expressed throughout the floor plate and hypochord at 24 hpf, and in forming head cartilages and the first forming tooth.

The protein localises to the secreted. It is found in the extracellular space. Its subcellular location is the extracellular matrix. In terms of biological role, may play a role during the calcification of cartilage and the transition of cartilage to bone. Together with col27a1b, plays a role in development of the notochord and axial skeleton. The polypeptide is Collagen alpha-1(XXVII) chain A (Danio rerio (Zebrafish)).